A 188-amino-acid polypeptide reads, in one-letter code: MSIKSDRWIRRMAAEHGMIEPFEAGQIKQAAGRSIVSYGTSSYGYDVRCASEFKLFTDINTTIVDPKAFDPNSFVEVKGDSCIIPPNSFALARTVEYFRIPRSVLTICLGKSTYARCGIIVNVTPLEPEWEGHVTLEFSNTTPLPARIYANEGVAQMLFLESDEVCETSYRDRGGKYQGQVGVTLPKI.

DCTP is bound by residues 111–116 (KSTYAR), 135–137 (TLE), Gln156, Tyr170, and Gln180. Glu137 functions as the Proton donor/acceptor in the catalytic mechanism.

It belongs to the dCTP deaminase family. As to quaternary structure, homotrimer.

The catalysed reaction is dCTP + H2O + H(+) = dUTP + NH4(+). It functions in the pathway pyrimidine metabolism; dUMP biosynthesis; dUMP from dCTP (dUTP route): step 1/2. Its function is as follows. Catalyzes the deamination of dCTP to dUTP. The polypeptide is dCTP deaminase (Thiobacillus denitrificans (strain ATCC 25259 / T1)).